The chain runs to 134 residues: Arsenate reductase (134 aa).

Active-site nucleophile residues include Cys11, Cys83, and Cys90. Intrachain disulfides connect Cys11-Cys83 and Cys83-Cys90.

This sequence belongs to the low molecular weight phosphotyrosine protein phosphatase family. Thioredoxin-coupled ArsC subfamily.

The protein resides in the cytoplasm. It catalyses the reaction arsenate + [thioredoxin]-dithiol + H(+) = arsenite + [thioredoxin]-disulfide + H2O. Functionally, catalyzes the reduction of arsenate [As(V)] to arsenite [As(III)]. The protein is Arsenate reductase of Bacillus cereus (strain ZK / E33L).